The following is a 391-amino-acid chain: 1-acyl-sn-glycerol-3-phosphate acyltransferase 2 (391 aa).

A helical transmembrane segment spans residues 3–23; it reads MAAAAVIVPLGILFFISGLVV. An HXXXXD motif motif is present at residues 92 to 97; that stretch reads HRSDID. Transmembrane regions (helical) follow at residues 306-326 and 334-354; these read LAVV…FLHW and KGIA…QILI. A disordered region spans residues 358-391; the sequence is QSERSTPAKVAPAKPKDKHQSGSSSQTEVEEKQK.

This sequence belongs to the 1-acyl-sn-glycerol-3-phosphate acyltransferase family.

The protein localises to the endoplasmic reticulum membrane. It carries out the reaction a 1-acyl-sn-glycero-3-phosphate + an acyl-CoA = a 1,2-diacyl-sn-glycero-3-phosphate + CoA. The protein operates within phospholipid metabolism; CDP-diacylglycerol biosynthesis; CDP-diacylglycerol from sn-glycerol 3-phosphate: step 2/3. Functionally, converts lysophosphatidic acid (LPA) into phosphatidic acid by incorporating acyl moiety at the 2 position. This chain is 1-acyl-sn-glycerol-3-phosphate acyltransferase 2 (LPAT2), found in Brassica oleracea (Wild cabbage).